A 251-amino-acid chain; its full sequence is Hydroxyacylglutathione hydrolase (251 aa).

Zn(2+) is bound by residues histidine 53, histidine 55, aspartate 57, histidine 58, histidine 110, aspartate 127, and histidine 165.

This sequence belongs to the metallo-beta-lactamase superfamily. Glyoxalase II family. Monomer. It depends on Zn(2+) as a cofactor.

It catalyses the reaction an S-(2-hydroxyacyl)glutathione + H2O = a 2-hydroxy carboxylate + glutathione + H(+). Its pathway is secondary metabolite metabolism; methylglyoxal degradation; (R)-lactate from methylglyoxal: step 2/2. In terms of biological role, thiolesterase that catalyzes the hydrolysis of S-D-lactoyl-glutathione to form glutathione and D-lactic acid. The sequence is that of Hydroxyacylglutathione hydrolase from Yersinia pestis (strain Pestoides F).